Here is an 87-residue protein sequence, read N- to C-terminus: MAHKKAGGSSRNGRDSESKRLGVKVYGGQAINAGGIIVRQRGTRMHPGENVGIGKDHTLFALTDGHVNFSTKGAAKKHMVNVVPAAV.

The segment at 1 to 21 (MAHKKAGGSSRNGRDSESKRL) is disordered.

It belongs to the bacterial ribosomal protein bL27 family.

In Paraburkholderia phytofirmans (strain DSM 17436 / LMG 22146 / PsJN) (Burkholderia phytofirmans), this protein is Large ribosomal subunit protein bL27.